A 308-amino-acid polypeptide reads, in one-letter code: Solute carrier family 25 member 47 (308 aa).

Solcar repeat units follow at residues 1–80 (MDFV…CLAH), 93–206 (PTKA…LCEW), and 215–302 (PDVP…VLRL). A run of 6 helical transmembrane segments spans residues 3 to 23 (FVAG…LDTV), 49 to 69 (VWGF…VSSV), 98 to 116 (ITLS…TSPT), 190 to 210 (GHSF…LSPA), 217 to 237 (VPGV…VATP), and 273 to 293 (VLFK…MVVF).

The protein belongs to the mitochondrial carrier (TC 2.A.29) family. As to expression, specifically expressed in liver.

Its subcellular location is the mitochondrion inner membrane. The protein localises to the mitochondrion outer membrane. It carries out the reaction NAD(+)(in) = NAD(+)(out). The catalysed reaction is acetyl-CoA(in) = acetyl-CoA(out). Its function is as follows. Mitochondrial NAD(+) transporter that acts as a 'metabolic gate' in hepatic lipogenesis. Provides NAD(+) substrate to mitochondrial SIRT3 deacetylase and enables its NAD(+)-dependent activities in mitochondrial energy metabolism. This triggers downstream activation of PRKAA1/AMPK-alpha signaling cascade that negatively regulates sterol regulatory element-binding protein (SREBP) transcriptional activities and ATP-consuming lipogenesis to restore cellular energy balance. May transport other mitochondrial metabolites having an aromatic nucleotide and phosphate groups, such as acetyl-CoA. Does not transport amino acids. The transport mechanism remains to be elucidated. This chain is Solute carrier family 25 member 47, found in Homo sapiens (Human).